The chain runs to 167 residues: NAD(P)H-quinone oxidoreductase subunit I, chloroplastic (167 aa).

2 consecutive 4Fe-4S ferredoxin-type domains span residues 55–84 (GRIHFEFDKCIACEVCVRVCPIDLPVVDWK) and 95–124 (LNYSIDFGICIFCGNCVEYCPTNCLSMTEE). [4Fe-4S] cluster-binding residues include Cys-64, Cys-67, Cys-70, Cys-74, Cys-104, Cys-107, Cys-110, and Cys-114.

Belongs to the complex I 23 kDa subunit family. As to quaternary structure, NDH is composed of at least 16 different subunits, 5 of which are encoded in the nucleus. The cofactor is [4Fe-4S] cluster.

It localises to the plastid. The protein resides in the chloroplast thylakoid membrane. It carries out the reaction a plastoquinone + NADH + (n+1) H(+)(in) = a plastoquinol + NAD(+) + n H(+)(out). It catalyses the reaction a plastoquinone + NADPH + (n+1) H(+)(in) = a plastoquinol + NADP(+) + n H(+)(out). In terms of biological role, NDH shuttles electrons from NAD(P)H:plastoquinone, via FMN and iron-sulfur (Fe-S) centers, to quinones in the photosynthetic chain and possibly in a chloroplast respiratory chain. The immediate electron acceptor for the enzyme in this species is believed to be plastoquinone. Couples the redox reaction to proton translocation, and thus conserves the redox energy in a proton gradient. This is NAD(P)H-quinone oxidoreductase subunit I, chloroplastic from Citrus sinensis (Sweet orange).